The following is a 177-amino-acid chain: UPF0178 protein TP_0845 (177 aa).

A disordered region spans residues 155-177 (EAKTGEEQCDWPSAQGKSQTGRR).

Belongs to the UPF0178 family.

This is UPF0178 protein TP_0845 from Treponema pallidum (strain Nichols).